We begin with the raw amino-acid sequence, 1131 residues long: MSSLSRELVFLILQFLDEEKFKESVHKLEQESGFFFNIKYFEEKALAGEWDEVEKYLSGFTKVDDNRYSMKIFFEIRKQKYLEALDRNDRAKAVEILAKDLKVFATFNEELYKEITQLLTLENFRENEQLSKYGDTKSARSIMYTELKKLIEANPLFREKLAFPSFKASRLRTLINQSLNWQHQLCKNPRPNPDIKTLFLDHSCSPSNGARALTPVNLPVAAVARPSNFVPLGVHGGPFQSNPAPAPNANALAGWMANPNPSSSVPSGVVAASPFPMQPSQVNELKHPRAPSNSLGLMDYQSADHEQLMKRLRSAQTSNEVTYPAHSHPPASLDDLPRNVVSTIRQGSVVISMDFHPSHHTLLAVGCSSGEVTLWEVGSREKVVTEPFKIWNMAACSVIFQGSIVKEPSISVTRVAWSPDGNLLGVSFTKHLIHVYAYQGSDLRQHLEIDAHVGCVNDLAFAHPNKQMCVVTCGDDKLIKVWDLSGKKLFTFEGHEAPVYSICPHQKENIQFIFSTALDGKIKAWLYDNVGSRVDYDAPGQWCTTMLYSADGSRLFSCGTSKEGDSFLVEWNESEGALKRTYLGFRKKSAGVVQFDTTRNRFLAVGEDNQIKFWNMDNTNLLTVVEAEGGLPNLPRLRFNKDGNLLAVTTADNGFKILANTDGLRTLRAFEARSFEASKASIDMKVSTSAMASSISPAIGKIEHMDAGSPARPTPIPNGIEAMSRTMEKPRNLDSVDKSKPLELTEIVDPTQCRQVTMPDSKDSVSKVARLLYTNSGVGVLALGSNGVQRLWKWIRNEQNPTGKATASVTPQHWQPNSGLLMANDVPENPEGSVPCIALSKNDSYVMSACGGKVSLFNMMTFKVMTTFMPPPPASTFLAFHPQDNNIIAIGMEDSSIHIYNVRVDEVKTKLKGHQKHITGLAFSTALNILVSSGADAQLFFWTADSWEKKKSSAIQLPPGKAPVGDTRVQFHNDQIQLLVSHETQLAIYDASKMECIHKWVPQEALSSPITSASYSCNSQLVYASFADGNIAVFDAESLRLRCRIAPSAYMPQPTPNSAPIFPQVITAHPQEPNQLAVGLSDGSVKVIEPSELSRRWGVGVAAGSDKAGTENGRPSSSSAANNSSSDQIQR.

The LisH domain occupies 4–36; that stretch reads LSRELVFLILQFLDEEKFKESVHKLEQESGFFF. The region spanning 34–92 is the CTLH domain; sequence FFFNIKYFEEKALAGEWDEVEKYLSGFTKVDDNRYSMKIFFEIRKQKYLEALDRNDRAK. Residue threonine 214 is modified to Phosphothreonine. WD repeat units follow at residues 345-385, 407-446, 451-493, 495-535, 585-624, 629-668, 763-802, 829-867, 870-910, 913-952, 959-999, and 1005-1044; these read RQGS…KVVT, EPSI…LRQH, AHVG…FTFE, HEAP…SRVD, FRKK…LLTV, GGLP…RTLR, DSVS…QNPT, NPEG…VMTT, PPPP…VKTK, GHQK…KKKS, PGKA…CIHK, and ALSS…LRCR. Residues 1099–1131 form a disordered region; sequence VGVAAGSDKAGTENGRPSSSSAANNSSSDQIQR. Low complexity predominate over residues 1116–1131; the sequence is SSSSAANNSSSDQIQR.

As to quaternary structure, tetramer. Interacts with NINJA/AFPH2. Interacts with SMXL6, SMXL7 and SMXL8. Interacts with SPL (via EAR motif). Interacts with SPEAR3/TIE1.

It is found in the nucleus. In terms of biological role, transcriptional corepressor. Negative regulator of jasmonate responses. This Arabidopsis thaliana (Mouse-ear cress) protein is Topless-related protein 2 (TPR2).